Here is a 361-residue protein sequence, read N- to C-terminus: Chorismate synthase (361 aa).

Residues R48 and R54 each coordinate NADP(+). Residues R125 to S127, N238 to A239, G278, K293 to S297, and R319 contribute to the FMN site.

This sequence belongs to the chorismate synthase family. In terms of assembly, homotetramer. Requires FMNH2 as cofactor.

The catalysed reaction is 5-O-(1-carboxyvinyl)-3-phosphoshikimate = chorismate + phosphate. It participates in metabolic intermediate biosynthesis; chorismate biosynthesis; chorismate from D-erythrose 4-phosphate and phosphoenolpyruvate: step 7/7. Catalyzes the anti-1,4-elimination of the C-3 phosphate and the C-6 proR hydrogen from 5-enolpyruvylshikimate-3-phosphate (EPSP) to yield chorismate, which is the branch point compound that serves as the starting substrate for the three terminal pathways of aromatic amino acid biosynthesis. This reaction introduces a second double bond into the aromatic ring system. In Escherichia coli O1:K1 / APEC, this protein is Chorismate synthase.